We begin with the raw amino-acid sequence, 547 residues long: Solute carrier family 22 member 7 (547 aa).

The helical transmembrane segment at 21–41 threads the bilayer; it reads VALLALPRVLLPMHFLLPIFL. Positions 91–103 are enriched in polar residues; that stretch reads NSTLWGEGQNSGE. The tract at residues 91–112 is disordered; sequence NSTLWGEGQNSGEQPEGEPSTV. Transmembrane regions (helical) follow at residues 145 to 165, 179 to 199, 203 to 223, 233 to 253, 258 to 278, 345 to 365, 367 to 387, 403 to 423, 431 to 451, 465 to 485, and 492 to 512; these read AIST…GYLS, VSSL…MFAI, LTGM…LEWL, VLSS…GYLI, WLLL…WWVP, ISLC…GVSL, LSGL…VELP, LTMA…ILVS, TALA…AYLF, MGLT…AALL, and LPKL…LLLP. The segment at 521 to 547 is disordered; the sequence is ETIQDVERKSAPSSLQEEEMPMKQVQD.

It belongs to the major facilitator (TC 2.A.1) superfamily. Organic cation transporter (TC 2.A.1.19) family.

It localises to the basolateral cell membrane. It is found in the apical cell membrane. Its subcellular location is the cell membrane. It catalyses the reaction orotate(out) + L-glutamate(in) = orotate(in) + L-glutamate(out). The catalysed reaction is 3',5'-cyclic GMP(in) = 3',5'-cyclic GMP(out). It carries out the reaction GMP(in) = GMP(out). The enzyme catalyses 2'-deoxyguanosine(in) = 2'-deoxyguanosine(out). It catalyses the reaction GDP(in) = GDP(out). The catalysed reaction is guanosine(in) = guanosine(out). It carries out the reaction GTP(in) = GTP(out). The enzyme catalyses 3',5'-cyclic AMP(in) = 3',5'-cyclic AMP(out). It catalyses the reaction creatinine(in) = creatinine(out). The catalysed reaction is prostaglandin E2(out) = prostaglandin E2(in). It carries out the reaction 2-oxoglutarate(in) = 2-oxoglutarate(out). The enzyme catalyses glutarate(in) = glutarate(out). It catalyses the reaction urate(out) = urate(in). The catalysed reaction is estrone 3-sulfate(out) = estrone 3-sulfate(in). Functionally, functions as a Na(+)-independent bidirectional multispecific transporter. Contributes to the renal and hepatic elimination of endogenous organic compounds from the systemic circulation into the urine and bile, respectively. Capable of transporting a wide range of purine and pyrimidine nucleobases, nucleosides and nucleotides, with cGMP, 2'deoxyguanosine and GMP being the preferred substrates. Functions as a pH- and chloride-independent cGMP bidirectional facilitative transporter that can regulate both intracellular and extracellular levels of cGMP and may be involved in cGMP signaling pathways. Mediates orotate/glutamate bidirectional exchange and most likely display a physiological role in hepatic release of glutamate into the blood. Involved in renal secretion and possible reabsorption of creatinine. Able to uptake prostaglandin E2 (PGE2) and may contribute to PGE2 renal excretion. Also transports alpha-ketoglutarate and urate. Apart from the orotate/glutamate exchange, the counterions for the uptake of other SLC22A7/OAT2 substrates remain to be identified. This chain is Solute carrier family 22 member 7 (SLC22A7), found in Bos taurus (Bovine).